Consider the following 379-residue polypeptide: UDP-N-acetylglucosamine--N-acetylmuramyl-(pentapeptide) pyrophosphoryl-undecaprenol N-acetylglucosamine transferase (379 aa).

Residues Thr-17 to Gly-19, Asn-128, Arg-169, Ser-197, and Gln-298 contribute to the UDP-N-acetyl-alpha-D-glucosamine site.

The protein belongs to the glycosyltransferase 28 family. MurG subfamily.

It localises to the cell inner membrane. The catalysed reaction is di-trans,octa-cis-undecaprenyl diphospho-N-acetyl-alpha-D-muramoyl-L-alanyl-D-glutamyl-meso-2,6-diaminopimeloyl-D-alanyl-D-alanine + UDP-N-acetyl-alpha-D-glucosamine = di-trans,octa-cis-undecaprenyl diphospho-[N-acetyl-alpha-D-glucosaminyl-(1-&gt;4)]-N-acetyl-alpha-D-muramoyl-L-alanyl-D-glutamyl-meso-2,6-diaminopimeloyl-D-alanyl-D-alanine + UDP + H(+). The protein operates within cell wall biogenesis; peptidoglycan biosynthesis. Functionally, cell wall formation. Catalyzes the transfer of a GlcNAc subunit on undecaprenyl-pyrophosphoryl-MurNAc-pentapeptide (lipid intermediate I) to form undecaprenyl-pyrophosphoryl-MurNAc-(pentapeptide)GlcNAc (lipid intermediate II). This Brucella suis (strain ATCC 23445 / NCTC 10510) protein is UDP-N-acetylglucosamine--N-acetylmuramyl-(pentapeptide) pyrophosphoryl-undecaprenol N-acetylglucosamine transferase.